Reading from the N-terminus, the 65-residue chain is uncharacterized protein (65 aa).

It localises to the plastid. It is found in the chloroplast. This is an uncharacterized protein from Porphyra purpurea (Red seaweed).